The primary structure comprises 328 residues: Ferredoxin--NADP reductase 1 (328 aa).

5 residues coordinate FAD: Glu37, Lys45, Tyr49, Val89, and Thr310.

Belongs to the ferredoxin--NADP reductase type 2 family. As to quaternary structure, homodimer. Requires FAD as cofactor.

It carries out the reaction 2 reduced [2Fe-2S]-[ferredoxin] + NADP(+) + H(+) = 2 oxidized [2Fe-2S]-[ferredoxin] + NADPH. The protein is Ferredoxin--NADP reductase 1 of Latilactobacillus sakei subsp. sakei (strain 23K) (Lactobacillus sakei subsp. sakei).